Reading from the N-terminus, the 130-residue chain is Small ribosomal subunit protein uS9 (130 aa).

This sequence belongs to the universal ribosomal protein uS9 family.

This is Small ribosomal subunit protein uS9 from Caldicellulosiruptor bescii (strain ATCC BAA-1888 / DSM 6725 / KCTC 15123 / Z-1320) (Anaerocellum thermophilum).